We begin with the raw amino-acid sequence, 1343 residues long: ABC multidrug transporter atrD (1343 aa).

A compositionally biased stretch (polar residues) spans 1–10 (MSPLETNPLS). Residues 1-67 (MSPLETNPLS…HRPKSSSSNN (67 aa)) form a disordered region. Residues 20 to 31 (ETSTTEEQASTP) show a composition bias toward low complexity. Residue Asn99 is glycosylated (N-linked (GlcNAc...) asparagine). The next 4 helical transmembrane spans lie at 114–134 (ILIM…LPLF), 163–183 (YFVY…VGFI), 235–255 (KVGL…IAYV), and 263–283 (ICSS…QFII). The ABC transmembrane type-1 1 domain occupies 115-403 (LIMVISTICA…VSPNAQAFTN (289 aa)). Asn309 carries an N-linked (GlcNAc...) asparagine glycan. A run of 2 helical transmembrane segments spans residues 339 to 359 (IVMG…YGLG) and 366 to 386 (FLVD…AILI). In terms of domain architecture, ABC transporter 1 spans 438–683 (IELRNVKHIY…GGAYRKLVEA (246 aa)). 473–480 (GPSGSGKS) serves as a coordination point for ATP. The N-linked (GlcNAc...) asparagine glycan is linked to Asn545. Transmembrane regions (helical) follow at residues 773–793 (MLIG…QAVL) and 820–840 (LMFF…GAAF). In terms of domain architecture, ABC transmembrane type-1 2 spans 774–1063 (LIGLVFSVLA…VFSFAPDMGK (290 aa)). Asn872 carries N-linked (GlcNAc...) asparagine glycosylation. The next 4 membrane-spanning stretches (helical) occupy residues 887–907 (HLSG…TTLG), 920–942 (LALV…FYML), 1010–1030 (ALVF…LGHH), and 1037–1057 (FFVC…VFSF). N-linked (GlcNAc...) asparagine glycosylation occurs at Asn1083. The 239-residue stretch at 1098–1336 (IEFRNVHFRY…KGRYYELVNL (239 aa)) folds into the ABC transporter 2 domain. Residue 1133-1140 (GPSGCGKS) coordinates ATP.

This sequence belongs to the ABC transporter superfamily. ABCB family. Multidrug resistance exporter (TC 3.A.1.201) subfamily.

It is found in the cell membrane. Fenamirol efflux transporter activity is inhibited by the cyclosporin derivative PSC 833, nigericin, reserpine and valinomycin. The effect of reserpine is transiant, while that of the cyclosporin derivative PSC 833, nigericin and valinomycin is proportional to the time of exposure. Cyclohexinmide has inhibitory effect only when applied prior to addition of the fungicide. In terms of biological role, pleiotropic ABC efflux transporter involved in the protection of the cells against a wide range of toxic compounds. Confers resistance to the azole fenarimol via efflux transport. May also be involved in the secretion of penicillin. The protein is ABC multidrug transporter atrD of Emericella nidulans (strain FGSC A4 / ATCC 38163 / CBS 112.46 / NRRL 194 / M139) (Aspergillus nidulans).